A 365-amino-acid polypeptide reads, in one-letter code: Protein AC54 (365 aa).

As to quaternary structure, interacts with C42 and VP80. Interacts with protein 38K.

The protein localises to the virion. In terms of biological role, structural protein that participates in nucleocapsid assembly. Plays an essential role in the proper localization of the major capsid protein VP39, and the minor capsid protein 38K into the capsid assembly site. The polypeptide is Protein AC54 (AC54) (Lepidoptera (butterflies and moths)).